Reading from the N-terminus, the 78-residue chain is Cytochrome c oxidase subunit 6b-2 (78 aa).

The region spanning 22–65 is the CHCH domain; that stretch reads TRHCFTRYIEFHRCTTAKGEESNDCERFAKYYRALCPGEWVDKW. The short motif at 25 to 35 is the Cx9C motif element; it reads CFTRYIEFHRC. 2 disulfides stabilise this stretch: cysteine 25–cysteine 57 and cysteine 35–cysteine 46. A Cx10C motif motif is present at residues 46–57; sequence CERFAKYYRALC.

This sequence belongs to the cytochrome c oxidase subunit 6B (TC 3.D.4.8) family. As to expression, specifically expressed in roots.

Its subcellular location is the mitochondrion. Its function is as follows. This protein is one of the nuclear-coded polypeptide chains of cytochrome c oxidase, the terminal oxidase in mitochondrial electron transport. This protein may be one of the heme-binding subunits of the oxidase. The sequence is that of Cytochrome c oxidase subunit 6b-2 (COX6B-2) from Arabidopsis thaliana (Mouse-ear cress).